The chain runs to 438 residues: Exodeoxyribonuclease 7 large subunit (438 aa).

The disordered stretch occupies residues 405 to 438; the sequence is GATSTGPTDDIPSSAARLPSSPAPDARPASGAES.

It belongs to the XseA family. In terms of assembly, heterooligomer composed of large and small subunits.

Its subcellular location is the cytoplasm. It carries out the reaction Exonucleolytic cleavage in either 5'- to 3'- or 3'- to 5'-direction to yield nucleoside 5'-phosphates.. In terms of biological role, bidirectionally degrades single-stranded DNA into large acid-insoluble oligonucleotides, which are then degraded further into small acid-soluble oligonucleotides. In Clavibacter michiganensis subsp. michiganensis (strain NCPPB 382), this protein is Exodeoxyribonuclease 7 large subunit.